Here is a 1613-residue protein sequence, read N- to C-terminus: Myosin-IIIa (1613 aa).

In terms of domain architecture, Protein kinase spans 21–287 (WEIIETIGKG…VSDLLKHKFI (267 aa)). ATP-binding positions include 27–35 (IGKGTYGKV) and Lys-50. Asp-150 serves as the catalytic Proton acceptor. The Myosin motor domain maps to 338-1052 (KDVDDLATLD…HVEQLNLMRK (715 aa)). Residues 933–955 (LMDLLSKMVVGQPHFVRCIKPNN) form an actin-binding region. 2 IQ domains span residues 1054–1083 (ATNK…KRKS) and 1081–1110 (RKSS…MKNT). Disordered stretches follow at residues 1136-1168 (VKKQ…TAPF) and 1476-1506 (SGVS…EDST). Over residues 1145–1161 (PTNESNTSTPNNKESPS) the composition is skewed to low complexity. Residues 1398–1476 (EGVHHSKMVD…RHVSTHQYLS (79 aa)) are interaction with MORN4. Over residues 1488–1497 (RPPRRPRKPK) the composition is skewed to basic residues.

It in the C-terminal section; belongs to the TRAFAC class myosin-kinesin ATPase superfamily. Myosin family. This sequence in the N-terminal section; belongs to the protein kinase superfamily. STE Ser/Thr protein kinase family. In terms of assembly, interacts with MORN4. Interacts (via C-terminus) with ESPN and ESPNL. In terms of tissue distribution, expressed in the cochlear hair cells (at protein level). Expressed in utricle hair bundles (at protein level).

It localises to the cytoplasm. Its subcellular location is the cytoskeleton. The protein localises to the cell projection. The protein resides in the filopodium tip. It is found in the stereocilium. The catalysed reaction is L-seryl-[protein] + ATP = O-phospho-L-seryl-[protein] + ADP + H(+). It catalyses the reaction L-threonyl-[protein] + ATP = O-phospho-L-threonyl-[protein] + ADP + H(+). It carries out the reaction ATP + H2O = ADP + phosphate + H(+). Actin-dependent motor protein with a protein kinase activity, playing an essential role in hearing. Probably plays also a role in vision. Required for normal cochlear hair bundle development and hearing. Plays an important role in the early steps of cochlear hair bundle morphogenesis. Influences the number and lengths of stereocilia to be produced and limits the growth of microvilli within the forming auditory hair bundles thereby contributing to the architecture of the hair bundle, including its staircase pattern. Involved in the elongation of actin in stereocilia tips by transporting the actin regulatory factor ESPN to the plus ends of actin filaments. This is Myosin-IIIa (Myo3a) from Mus musculus (Mouse).